Reading from the N-terminus, the 497-residue chain is Nucleoside transporter 1 (497 aa).

Residues M1 to E26 are Cytoplasmic-facing. A helical membrane pass occupies residues F27–V47. Residues F48 to N77 lie on the Extracellular side of the membrane. A helical membrane pass occupies residues V78 to L98. Over L99–M107 the chain is Cytoplasmic. A helical membrane pass occupies residues L108–V128. Residues P129 to E135 lie on the Extracellular side of the membrane. Residues A136–F156 form a helical membrane-spanning segment. Residues E157–T172 are Cytoplasmic-facing. The chain crosses the membrane as a helical span at residues S173–V193. The Extracellular segment spans residues K194 to S208. A helical transmembrane segment spans residues Y209–M229. Residues R230–K337 lie on the Cytoplasmic side of the membrane. Residues N286 to E299 show a composition bias toward basic and acidic residues. The segment at N286 to E316 is disordered. Residues W338–A358 form a helical membrane-spanning segment. Over T359–M361 the chain is Extracellular. Residues F362–L382 traverse the membrane as a helical segment. Residues G383 to R400 lie on the Cytoplasmic side of the membrane. Residues W401–S421 traverse the membrane as a helical segment. Over Y422 to Y432 the chain is Extracellular. A helical membrane pass occupies residues V433–G453. Over P454–R465 the chain is Cytoplasmic. Residues F466 to L486 form a helical membrane-spanning segment. The Extracellular portion of the chain corresponds to S487–Y497.

It belongs to the SLC29A/ENT transporter (TC 2.A.57) family.

It localises to the cell membrane. The enzyme catalyses adenosine(in) = adenosine(out). It catalyses the reaction hypoxanthine(out) = hypoxanthine(in). It carries out the reaction inosine(in) = inosine(out). The catalysed reaction is uridine(out) = uridine(in). The enzyme catalyses cytidine(in) = cytidine(out). Nucleoside transporter with broad substrate specificity. Transports adenosine with high affinity. Can also transport hypoxanthine, inosine, uridine and cytidine. The polypeptide is Nucleoside transporter 1 (Crithidia fasciculata).